Consider the following 779-residue polypeptide: Abnormal cell migration protein 10 (779 aa).

A compositionally biased stretch (acidic residues) spans 78–97; sequence NELEADTEEDIAETADDEES. Disordered stretches follow at residues 78–105, 189–217, and 242–302; these read NELEADTEEDIAETADDEESKDPVEKTE, SSSRENVKSISTLPPPPPALSYHQTPQQP, and AASS…NAEE. Positions 189 to 200 are enriched in polar residues; sequence SSSRENVKSIST. Over residues 242-254 the composition is skewed to low complexity; sequence AASSCSSPDGDSA. Over residues 256–293 the composition is skewed to polar residues; that stretch reads GDSSSTESSNNRCRNSAFSSNDSCRDSLNTPSPTQVSP. Positions 317-407 constitute a Ras-associating domain; sequence EAKVTKIFVK…NKLYFMRRPD (91 aa). The PH domain maps to 456-566; the sequence is PPEMEGFLYL…WLVALRIAKN (111 aa). Composition is skewed to polar residues over residues 645 to 660 and 688 to 698; these read SFSVNSCQQSHPSRTS and RASTSSPTIPQ. The disordered stretch occupies residues 645–763; that stretch reads SFSVNSCQQS…SPMAPAKNDL (119 aa). A compositionally biased stretch (pro residues) spans 708–729; sequence PAPPPVASVMRMPPPVTPPKPC.

It belongs to the MRL family. In terms of assembly, may interact (via Ras-associating and PH domains) with ced-10 (GTP-bound form).

Its subcellular location is the perikaryon. Its function is as follows. Required cell non-autonomously for proper development of the excretory canals and for the long-range anterior-posterior migrations of embryonic neurons CAN, ALM and HSN. Plays a role, probably downstream of ced-10/rac1, in orientating axonal growth of HSN and AVM neurons in response to guidance cues such as slt-1. May regulate growth cone polarization by promoting asymmetric F-actin assembly. May be involved in signal transduction during cell migration. The protein is Abnormal cell migration protein 10 of Caenorhabditis elegans.